The sequence spans 274 residues: Deoxyribonuclease TATDN3 (274 aa).

Positions 12, 14, 107, 147, 170, and 218 each coordinate Zn(2+).

This sequence belongs to the metallo-dependent hydrolases superfamily. TatD-type hydrolase family. It depends on Mn(2+) as a cofactor. Ca(2+) is required as a cofactor. Requires Mg(2+) as cofactor. Zn(2+) serves as cofactor.

It localises to the nucleus. With respect to regulation, the 3'-exonuclease activity is sensitive to the metal ion present in the active site, whereas the AP endodeoxyribonuclease activity is observed in a variety of divalent metal cofactors. 3'-exoxonuclease activity is suppressed in the presence of Ca(2+), Zn(2+) and Ni(2+). Exhibits 3'-exonuclease activities and apurinic/apyrimidinic (AP) endonuclease (in vitro). Show preferential AP endonuclease activity on double-stranded DNA substrates and 3'- exonuclease activity on single-stranded DNA. This chain is Deoxyribonuclease TATDN3 (TATDN3), found in Homo sapiens (Human).